The sequence spans 717 residues: uncharacterized protein (717 aa).

A helical membrane pass occupies residues 19 to 38 (VFLSTIFVSIIFCLGILFLV).

It to E.coli YtfN.

It localises to the membrane. This is an uncharacterized protein from Buchnera aphidicola subsp. Baizongia pistaciae (strain Bp).